The sequence spans 453 residues: MDWKEILRRRLATPSTSPHKKKSEQELKDEEMDLFTKYYSEWKGGRKNTNEFYKTIPRFYYRLPAEDEVLLQKLREESRAVFLQRKSRELLDNEELQNLWFLLDKHQTPPMIGEEAMINYENFLKVGEKAGPKCKQFFTAKVFAKLLHTDSYGRISIMQFFNYVMRKVWLHQTRIGLSLYDVAGQGYLRESDLENYILELIPTLPQLDGLEKSFYSFYVCTAVRKFFFFLDPLRTGKIKIQDILACSFLDDLLELRDEELSKESQETNWFSAPSALRVYGQYLNLDKDHNGMLSKEELSRYGTATMTNVFLDRVFQECLTYDGEMDYKTYLDFVLALENRKEPAALQYIFKLLDIENKGYLNVFSLNYFFRAIQELMKIHGQDPVSFQDVKDEIFDMVKPKDPLKISLQDLINSNQGDTVTTILIDLNGFWTYENREALVANDNENSTDLDDT.

2 EF-hand domains span residues 273–308 (PSAL…TMTN) and 341–376 (KEPA…IQEL). Positions 286, 288, 290, 292, and 297 each coordinate Ca(2+).

In terms of assembly, interacts with MCM3AP/GANP, PPP5C, and the phosphatase 2A core enzyme composed of the PPP2CA catalytic subunit and the constant regulatory subunit PPP2R1A. Finds in a complex with ABCB1, TFPI2 and PPP2R3C; leading to the dephosphorylation of ABCB1.

The protein localises to the nucleus. The protein resides in the cytoplasm. Its function is as follows. May regulate MCM3AP phosphorylation through phosphatase recruitment. May act as a negative regulator of ABCB1 expression and function through the dephosphorylation of ABCB1 by TFPI2/PPP2R3C complex. May play a role in the activation-induced cell death of B-cells. This Bos taurus (Bovine) protein is Serine/threonine-protein phosphatase 2A regulatory subunit B'' subunit gamma (PPP2R3C).